An 89-amino-acid polypeptide reads, in one-letter code: HssA/B-like protein 16 (89 aa).

It belongs to the hssA/B family.

The protein is HssA/B-like protein 16 (hssl16) of Dictyostelium discoideum (Social amoeba).